Here is a 166-residue protein sequence, read N- to C-terminus: Lipoprotein signal peptidase (166 aa).

4 consecutive transmembrane segments (helical) span residues 9 to 29, 45 to 65, 71 to 91, and 100 to 120; these read ASGA…FDQL, ALTS…FGFL, WQRW…CFLL, and FSLS…DRLV. Active-site residues include D126 and D144. Residues 135 to 155 form a helical membrane-spanning segment; sequence WHFPAFNLADSAITVGAVLLV.

This sequence belongs to the peptidase A8 family.

It localises to the cell inner membrane. It catalyses the reaction Release of signal peptides from bacterial membrane prolipoproteins. Hydrolyzes -Xaa-Yaa-Zaa-|-(S,diacylglyceryl)Cys-, in which Xaa is hydrophobic (preferably Leu), and Yaa (Ala or Ser) and Zaa (Gly or Ala) have small, neutral side chains.. It functions in the pathway protein modification; lipoprotein biosynthesis (signal peptide cleavage). Functionally, this protein specifically catalyzes the removal of signal peptides from prolipoproteins. The chain is Lipoprotein signal peptidase from Burkholderia ambifaria (strain MC40-6).